The chain runs to 369 residues: Flagellar P-ring protein (369 aa).

Residues Met-1–Ala-23 form the signal peptide.

The protein belongs to the FlgI family. In terms of assembly, the basal body constitutes a major portion of the flagellar organelle and consists of four rings (L,P,S, and M) mounted on a central rod.

The protein localises to the periplasm. It is found in the bacterial flagellum basal body. In terms of biological role, assembles around the rod to form the L-ring and probably protects the motor/basal body from shearing forces during rotation. The chain is Flagellar P-ring protein from Pectobacterium carotovorum subsp. carotovorum (strain PC1).